We begin with the raw amino-acid sequence, 629 residues long: Coiled-coil domain-containing protein 120 (629 aa).

Positions 31–70 (RLRGLLDRQRALQEALSVKLQELRKVCLQEAELTGQLPPE) are involved in CYTH2-binding. Residues 109–173 (ELALEALERE…LRDFRARLGL (65 aa)) adopt a coiled-coil conformation. Low complexity-rich tracts occupy residues 209-219 (HSESSSLSESG) and 279-294 (ASPT…SASS). The segment at 209–356 (HSESSSLSES…LFAARTRRSN (148 aa)) is disordered. The span at 323–332 (RQWSGSQDSQ) shows a compositional bias: polar residues. Ser355 and Ser357 each carry phosphoserine. Disordered stretches follow at residues 399 to 432 (QPVP…GAPR) and 602 to 629 (PSQA…FTDG). The span at 418–432 (ARPSSAAPASRGAPR) shows a compositional bias: low complexity. Arg432 bears the Omega-N-methylarginine mark.

In terms of assembly, interacts with NIN and CEP170; leading to recruit them to centrosomes. Interacts with CYTH2; this interaction is direct and stabilizes CCDC120, possibly by preventing ubiquitination. In terms of processing, ubiquitinated; interaction with CYTH2 may prevent ubiquitination.

It is found in the cytoplasm. The protein localises to the cytoskeleton. The protein resides in the microtubule organizing center. It localises to the centrosome. Its subcellular location is the centriole. It is found in the cell projection. The protein localises to the neuron projection. The protein resides in the growth cone. It localises to the endosome. Functionally, centriolar protein required for centriole subdistal appendage assembly and microtubule anchoring in interphase cells. Together with CCDC68, cooperate with subdistal appendage components ODF2, NIN and CEP170 for hierarchical subdistal appendage assembly. Recruits NIN and CEP170 to centrosomes. Also required for neurite growth. Localizes CYTH2 to vesicles to allow its transport along neurites, and subsequent ARF6 activation and neurite growth. This chain is Coiled-coil domain-containing protein 120, found in Mus musculus (Mouse).